A 382-amino-acid chain; its full sequence is Mannitol-1-phosphate 5-dehydrogenase (382 aa).

3 to 14 (AVHFGAGNIGRG) lines the NAD(+) pocket.

It belongs to the mannitol dehydrogenase family.

The catalysed reaction is D-mannitol 1-phosphate + NAD(+) = beta-D-fructose 6-phosphate + NADH + H(+). The protein is Mannitol-1-phosphate 5-dehydrogenase (mtlD) of Geobacillus stearothermophilus (Bacillus stearothermophilus).